Consider the following 99-residue polypeptide: Small ribosomal subunit protein bS21 (99 aa).

Residues 60 to 99 (KKLQREGLLPMKPKPVFGAGPGGDRRGPGAGPGAGPRPAR) are disordered.

It belongs to the bacterial ribosomal protein bS21 family.

In Rhodopseudomonas palustris (strain BisA53), this protein is Small ribosomal subunit protein bS21.